A 348-amino-acid chain; its full sequence is L-threonine 3-dehydrogenase (348 aa).

Cysteine 42 is a Zn(2+) binding site. Residues threonine 44 and histidine 47 each act as charge relay system in the active site. Residues histidine 67, glutamate 68, cysteine 97, cysteine 100, cysteine 103, and cysteine 111 each coordinate Zn(2+). NAD(+) contacts are provided by residues leucine 179, glutamate 199, arginine 204, 266–268 (LGL), and 291–292 (IT).

This sequence belongs to the zinc-containing alcohol dehydrogenase family. As to quaternary structure, homodimer. Homotetramer; dimer of dimers. Zn(2+) is required as a cofactor.

It localises to the cytoplasm. The catalysed reaction is L-threonine + NAD(+) = (2S)-2-amino-3-oxobutanoate + NADH + H(+). Its pathway is amino-acid degradation; L-threonine degradation via oxydo-reductase pathway; glycine from L-threonine: step 1/2. Its activity is regulated as follows. Is totally inhibited by EDTA in vitro. Its function is as follows. Catalyzes the NAD(+)-dependent oxidation of L-threonine to 2-amino-3-ketobutyrate. Is much less efficient when using NADP(+) instead of NAD(+). To a lesser extent, also catalyzes the oxidation of L-serine and DL-threo-3-phenylserine, but not that of L-allo-threonine, D-threonine and D-allo-threonine and many other L-amino acids. In Pyrococcus horikoshii (strain ATCC 700860 / DSM 12428 / JCM 9974 / NBRC 100139 / OT-3), this protein is L-threonine 3-dehydrogenase.